A 334-amino-acid polypeptide reads, in one-letter code: Protein-methionine-sulfoxide reductase catalytic subunit MsrP (334 aa).

A signal peptide (tat-type signal) is located at residues Met-1 to Ala-44. Residues Asn-88, Tyr-91–Glu-92, Cys-146, Thr-181, Asn-233, Arg-238, and Gly-249–Lys-251 contribute to the Mo-molybdopterin site.

It belongs to the MsrP family. In terms of assembly, heterodimer of a catalytic subunit (MsrP) and a heme-binding subunit (MsrQ). It depends on Mo-molybdopterin as a cofactor. In terms of processing, predicted to be exported by the Tat system. The position of the signal peptide cleavage has not been experimentally proven.

It localises to the periplasm. The enzyme catalyses L-methionyl-[protein] + a quinone + H2O = L-methionyl-(S)-S-oxide-[protein] + a quinol. It catalyses the reaction L-methionyl-[protein] + a quinone + H2O = L-methionyl-(R)-S-oxide-[protein] + a quinol. Its function is as follows. Part of the MsrPQ system that repairs oxidized periplasmic proteins containing methionine sulfoxide residues (Met-O), using respiratory chain electrons. Thus protects these proteins from oxidative-stress damage caused by reactive species of oxygen and chlorine generated by the host defense mechanisms. MsrPQ is essential for the maintenance of envelope integrity under bleach stress, rescuing a wide series of structurally unrelated periplasmic proteins from methionine oxidation, including the primary periplasmic chaperone SurA and the lipoprotein Pal. The catalytic subunit MsrP is non-stereospecific, being able to reduce both (R-) and (S-) diastereoisomers of methionine sulfoxide. The protein is Protein-methionine-sulfoxide reductase catalytic subunit MsrP of Escherichia coli O139:H28 (strain E24377A / ETEC).